Reading from the N-terminus, the 1025-residue chain is DNA ligase 4 (1025 aa).

Residues 1–36 are disordered; sequence MMQPTPAPSSAPGSPQRTQAEPEMETPSYPQPPQNV. Residues Glu289, Lys291, Leu292, Arg296, Glu349, Phe387, Glu447, Lys452, Lys469, and Lys471 each coordinate ATP. The active-site N6-AMP-lysine intermediate is Lys291. Mg(2+) is bound at residue Glu349. Glu447 is a Mg(2+) binding site. One can recognise a BRCT 1 domain in the interval 667–763; sequence VKTDIFNGMK…EPAPFKKKYF (97 aa). Residues 773 to 904 are disordered; it reads ADEYNEDDGE…TTPDVDGDVK (132 aa). Composition is skewed to acidic residues over residues 775-785 and 806-816; these read EYNEDDGEEEG and SETEDEDEEQA. A compositionally biased stretch (basic and acidic residues) spans 817–838; sequence PEIKEEQDGELHEWLKVDDRKS. Positions 845–870 are enriched in acidic residues; that stretch reads DEEDSVTEDDSDNADVADEEEPDLDD. Over residues 891 to 904 the composition is skewed to basic and acidic residues; it reads RHRETTPDVDGDVK. The 111-residue stretch at 915-1025 folds into the BRCT 2 domain; sequence DPDVIFKHLC…TLLDEEEFAP (111 aa).

It belongs to the ATP-dependent DNA ligase family. Mg(2+) serves as cofactor.

The protein resides in the nucleus. It catalyses the reaction ATP + (deoxyribonucleotide)n-3'-hydroxyl + 5'-phospho-(deoxyribonucleotide)m = (deoxyribonucleotide)n+m + AMP + diphosphate.. Functionally, DNA ligase involved in DNA non-homologous end joining (NHEJ); required for double-strand break (DSB) repair. The chain is DNA ligase 4 (LIG4) from Coprinopsis cinerea (Inky cap fungus).